The sequence spans 314 residues: MMEIRTPKTGKAKRVLESRAPKLVETGKKTLILHGTKTSATLSSVMTELYRLKKGGAIRYSRRNENIRPFESGGETSLEFFSQKTDCSIFVYGSHTKKRPDNLVLGRMYDHQVYDLIEVGIENFKSLRAFSYDKKFAPHEGTKPFICFIGEGFENVSELKHLKEVLTDLFRGEVVDNLNLTGLDRAYVCSAISPTKVFLTHCALKLKKSGSIVPRMELVEVGPSMDLVIRRNRLPNDSLMKEAMRTSKDKPKKKEKNVDQDAVLGKTGKIYMPDQKLKEMKLFDKSKGSKRERKDAKLKHKEETVAKKMKVSSE.

Positions 28–238 constitute a Brix domain; the sequence is KKTLILHGTK…IRRNRLPNDS (211 aa). Residues 238–314 form a disordered region; it reads SLMKEAMRTS…VAKKMKVSSE (77 aa). Composition is skewed to basic and acidic residues over residues 239-249 and 275-314; these read LMKEAMRTSKD and QKLK…VSSE.

The protein belongs to the RPF2 family.

It is found in the nucleus. The protein localises to the nucleolus. This Arabidopsis thaliana (Mouse-ear cress) protein is Ribosome production factor 2 homolog.